Consider the following 89-residue polypeptide: Large ribosomal subunit protein eL34 (89 aa).

The protein belongs to the eukaryotic ribosomal protein eL34 family.

This chain is Large ribosomal subunit protein eL34, found in Methanococcus maripaludis (strain C6 / ATCC BAA-1332).